We begin with the raw amino-acid sequence, 398 residues long: Succinate--CoA ligase [ADP-forming] subunit beta (398 aa).

The region spanning 9 to 254 (KALLKSYGAP…TTEEDEKEIE (246 aa)) is the ATP-grasp domain. Residues Lys-46, 53 to 55 (GRG), Glu-109, Ala-112, and Glu-117 contribute to the ATP site. The Mg(2+) site is built by Asn-209 and Asp-223. Residues Asn-274 and 331–333 (GIM) contribute to the substrate site.

Belongs to the succinate/malate CoA ligase beta subunit family. Heterotetramer of two alpha and two beta subunits. It depends on Mg(2+) as a cofactor.

It catalyses the reaction succinate + ATP + CoA = succinyl-CoA + ADP + phosphate. The catalysed reaction is GTP + succinate + CoA = succinyl-CoA + GDP + phosphate. The protein operates within carbohydrate metabolism; tricarboxylic acid cycle; succinate from succinyl-CoA (ligase route): step 1/1. Succinyl-CoA synthetase functions in the citric acid cycle (TCA), coupling the hydrolysis of succinyl-CoA to the synthesis of either ATP or GTP and thus represents the only step of substrate-level phosphorylation in the TCA. The beta subunit provides nucleotide specificity of the enzyme and binds the substrate succinate, while the binding sites for coenzyme A and phosphate are found in the alpha subunit. The polypeptide is Succinate--CoA ligase [ADP-forming] subunit beta (Sinorhizobium medicae (strain WSM419) (Ensifer medicae)).